The sequence spans 733 residues: Photosystem I P700 chlorophyll a apoprotein A2 (733 aa).

A run of 8 helical transmembrane segments spans residues 46-69 (IFAS…FHVA), 135-158 (LYQG…LHLQ), 175-199 (LNHH…HVAI), 273-291 (IAHH…GHMY), 330-353 (LHFQ…QHMY), 369-395 (AALY…IFFV), 417-439 (ALIS…LYVH), and 516-534 (FLVH…LILV). Residues C558 and C567 each contribute to the [4Fe-4S] cluster site. 2 helical membrane-spanning segments follow: residues 574–595 (AFYL…YWHW) and 642–664 (LSVW…MFLI). Residues H653, M661, and Y669 each contribute to the chlorophyll a site. W670 is a binding site for phylloquinone. Residues 706 to 726 (LVGLAHFTVGYVLTYAAFLIA) form a helical membrane-spanning segment.

It belongs to the PsaA/PsaB family. The PsaA/B heterodimer binds the P700 chlorophyll special pair and subsequent electron acceptors. PSI consists of a core antenna complex that captures photons, and an electron transfer chain that converts photonic excitation into a charge separation. The cyanobacterial PSI reaction center is composed of one copy each of PsaA,B,C,D,E,F,I,J,K,L,M and X, and forms trimeric complexes. Requires PSI electron transfer chain: 5 chlorophyll a, 1 chlorophyll a', 2 phylloquinones and 3 4Fe-4S clusters. PSI core antenna: 90 chlorophyll a, 22 carotenoids, 3 phospholipids and 1 galactolipid. P700 is a chlorophyll a/chlorophyll a' dimer, A0 is one or more chlorophyll a, A1 is one or both phylloquinones and FX is a shared 4Fe-4S iron-sulfur center. as cofactor.

It is found in the cellular thylakoid membrane. The enzyme catalyses reduced [plastocyanin] + hnu + oxidized [2Fe-2S]-[ferredoxin] = oxidized [plastocyanin] + reduced [2Fe-2S]-[ferredoxin]. Its function is as follows. PsaA and PsaB bind P700, the primary electron donor of photosystem I (PSI), as well as the electron acceptors A0, A1 and FX. PSI is a plastocyanin/cytochrome c6-ferredoxin oxidoreductase, converting photonic excitation into a charge separation, which transfers an electron from the donor P700 chlorophyll pair to the spectroscopically characterized acceptors A0, A1, FX, FA and FB in turn. Oxidized P700 is reduced on the lumenal side of the thylakoid membrane by plastocyanin or cytochrome c6. This is Photosystem I P700 chlorophyll a apoprotein A2 from Picosynechococcus sp. (strain ATCC 27264 / PCC 7002 / PR-6) (Agmenellum quadruplicatum).